The primary structure comprises 134 residues: MKSVFTISASLAISLMLCCTAQANDHKLLGAIAMPRNETNDLALKLPVCRIVKRIQLSADHGDLQLSGASVYFKAARSASQSLNIPSEIKEGQTTDWININSDNDNKRCVSKITFSGHTVNSSDMATLKIIGDD.

The signal sequence occupies residues 1–23; it reads MKSVFTISASLAISLMLCCTAQA.

It belongs to the UPF0412 family.

In Escherichia coli (strain K12), this protein is UPF0412 protein YaaI.